The chain runs to 151 residues: Arginine repressor (151 aa).

The protein belongs to the ArgR family.

The protein localises to the cytoplasm. It functions in the pathway amino-acid biosynthesis; L-arginine biosynthesis [regulation]. Its function is as follows. Regulates arginine biosynthesis genes. The polypeptide is Arginine repressor (Pelotomaculum thermopropionicum (strain DSM 13744 / JCM 10971 / SI)).